A 151-amino-acid polypeptide reads, in one-letter code: UPF0251 protein Ctha_0452 (151 aa).

The protein belongs to the UPF0251 family.

In Chloroherpeton thalassium (strain ATCC 35110 / GB-78), this protein is UPF0251 protein Ctha_0452.